The chain runs to 161 residues: Phosphopantetheine adenylyltransferase (161 aa).

S8 is a binding site for substrate. ATP-binding positions include 8–9 (SF) and H16. Residues 36–40 (ENPRK), L72, and R86 each bind substrate. ATP is bound by residues 87-89 (GLR), E97, and 122-128 (FSFISSS). E132 provides a ligand contact to substrate.

The protein belongs to the bacterial CoaD family. Homohexamer. Mg(2+) serves as cofactor.

It is found in the cytoplasm. The enzyme catalyses (R)-4'-phosphopantetheine + ATP + H(+) = 3'-dephospho-CoA + diphosphate. Its pathway is cofactor biosynthesis; coenzyme A biosynthesis; CoA from (R)-pantothenate: step 4/5. Functionally, reversibly transfers an adenylyl group from ATP to 4'-phosphopantetheine, yielding dephospho-CoA (dPCoA) and pyrophosphate. The protein is Phosphopantetheine adenylyltransferase of Thermotoga maritima (strain ATCC 43589 / DSM 3109 / JCM 10099 / NBRC 100826 / MSB8).